Reading from the N-terminus, the 468-residue chain is Adenosylhomocysteinase (468 aa).

Residues T57, D132, and E194 each coordinate substrate. 195–197 serves as a coordination point for NAD(+); that stretch reads TTT. Positions 224 and 228 each coordinate substrate. Residues N229, 258–263, E281, N316, 337–339, and N382 contribute to the NAD(+) site; these read GFGDVG and IGH.

It belongs to the adenosylhomocysteinase family. NAD(+) serves as cofactor.

The protein resides in the cytoplasm. It carries out the reaction S-adenosyl-L-homocysteine + H2O = L-homocysteine + adenosine. It participates in amino-acid biosynthesis; L-homocysteine biosynthesis; L-homocysteine from S-adenosyl-L-homocysteine: step 1/1. Functionally, may play a key role in the regulation of the intracellular concentration of adenosylhomocysteine. In Methylobacterium nodulans (strain LMG 21967 / CNCM I-2342 / ORS 2060), this protein is Adenosylhomocysteinase.